The following is a 117-amino-acid chain: Elafin (117 aa).

The N-terminal stretch at 1–22 (MRASSFLIVVVFLIAGTLVLEA) is a signal peptide. Positions 23–60 (AVTGVPVKGQDTVKGRVPFNGQDPVKGQVSVKGQDKVK) are excised as a propeptide. SVP-1 clotting repeat units lie at residues 29–54 (VKGQ…VSVK) and 55–72 (GQDK…VSTK). The tract at residues 29 to 72 (VKGQDTVKGRVPFNGQDPVKGQVSVKGQDKVKAQEPVKGPVSTK) is 2 X tandem repeats of SVP-1 like motif. The region spanning 69-117 (VSTKPGSCPIILIRCAMLNPPNRCLKDTDCPGIKKCCEGSCGMACFVPQ) is the WAP domain. Cystine bridges form between C76–C105, C83–C109, C92–C104, and C98–C113.

It localises to the secreted. Neutrophil and pancreatic elastase-specific inhibitor of skin. It may prevent elastase-mediated tissue proteolysis. Has been shown to inhibit the alpha-4-beta-2/CHRNA2-CHRNB2 nicotinic acetylcholine receptor and to produce a weak inhibition on Kv11.1/KCNH2/ERG1 and on the transient receptor potential cation channel subfamily V member 1 (TRPV1). The chain is Elafin (PI3) from Homo sapiens (Human).